A 272-amino-acid chain; its full sequence is Exosome complex component MTR3 (272 aa).

The tract at residues methionine 1–leucine 36 is disordered.

The protein belongs to the RNase PH family. Component of the RNA exosome core complex (Exo-9), composed of EXOSC1, EXOSC2, EXOSC3, EXOSC4, EXOSC5, EXOSC6, EXOSC7, EXOSC8 and EXOSC9; within the complex interacts with EXOSC1, EXOSC7 and EXOSC8. The catalytically inactive Exo-9 may associate with the catalytic subunit EXOSC10/RRP6. Exo-9 may associate with DIS3 to form the nucleolar exosome complex, or DIS3L to form the cytoplasmic exosome complex. Exo-9 is formed by a hexameric base ring consisting of the heterodimers EXOSC4-EXOSC9, EXOSC5-EXOSC8 and EXOSC6-EXOSC7, and a cap ring consisting of EXOSC1, EXOSC2 and EXOSC3. The RNA exosome complex associates with cofactors EXOSC10/RRP6, C1D/RRP47, MPHOSPH6/MPP6 and MTREX/MTR4.

It localises to the cytoplasm. It is found in the nucleus. Its subcellular location is the nucleolus. In terms of biological role, non-catalytic component of the RNA exosome complex which has 3'-&gt;5' exoribonuclease activity and participates in a multitude of cellular RNA processing and degradation events. In the nucleus, the RNA exosome complex is involved in proper maturation of stable RNA species such as rRNA, snRNA and snoRNA, in the elimination of RNA processing by-products and non-coding 'pervasive' transcripts, such as antisense RNA species and promoter-upstream transcripts (PROMPTs), and of mRNAs with processing defects, thereby limiting or excluding their export to the cytoplasm. The RNA exosome may be involved in Ig class switch recombination (CSR) and/or Ig variable region somatic hypermutation (SHM) by targeting AICDA deamination activity to transcribed dsDNA substrates. In the cytoplasm, the RNA exosome complex is involved in general mRNA turnover and specifically degrades inherently unstable mRNAs containing AU-rich elements (AREs) within their 3' untranslated regions, and in RNA surveillance pathways, preventing translation of aberrant mRNAs. It seems to be involved in degradation of histone mRNA. The catalytic inactive RNA exosome core complex of 9 subunits (Exo-9) is proposed to play a pivotal role in the binding and presentation of RNA for ribonucleolysis, and to serve as a scaffold for the association with catalytic subunits and accessory proteins or complexes. The protein is Exosome complex component MTR3 (EXOSC6) of Homo sapiens (Human).